Consider the following 578-residue polypeptide: tRNA (guanine(26)-N(2))-dimethyltransferase (578 aa).

The Trm1 methyltransferase domain occupies 18-451 (NVIRERNAEI…APPAVLWDIL (434 aa)). Position 43 (R43) interacts with S-adenosyl-L-methionine. The disordered stretch occupies residues 63–92 (EKALKKQRKKVKEQEDEKTTPVPEDPPVYE). S-adenosyl-L-methionine-binding residues include R113 and D131. 4 residues coordinate Zn(2+): C295, C298, C335, and C338. The tract at residues 491–578 (EANPKSRKSA…PKQPKLEATA (88 aa)) is disordered. The span at 564–578 (DVEHLPKQPKLEATA) shows a compositional bias: basic and acidic residues.

This sequence belongs to the class I-like SAM-binding methyltransferase superfamily. Trm1 family.

The enzyme catalyses guanosine(26) in tRNA + 2 S-adenosyl-L-methionine = N(2)-dimethylguanosine(26) in tRNA + 2 S-adenosyl-L-homocysteine + 2 H(+). Functionally, dimethylates a single guanine residue at position 26 of most tRNAs using S-adenosyl-L-methionine as donor of the methyl groups. The protein is tRNA (guanine(26)-N(2))-dimethyltransferase of Drosophila melanogaster (Fruit fly).